We begin with the raw amino-acid sequence, 115 residues long: NADH-ubiquinone oxidoreductase chain 3 (115 aa).

The next 3 helical transmembrane spans lie at 4 to 24, 55 to 75, and 86 to 106; these read MLIL…AFWL, FFLV…LLPL, and MLMT…AYEW.

This sequence belongs to the complex I subunit 3 family. As to quaternary structure, core subunit of respiratory chain NADH dehydrogenase (Complex I) which is composed of 45 different subunits. Interacts with TMEM186. Interacts with TMEM242.

It is found in the mitochondrion inner membrane. It catalyses the reaction a ubiquinone + NADH + 5 H(+)(in) = a ubiquinol + NAD(+) + 4 H(+)(out). Core subunit of the mitochondrial membrane respiratory chain NADH dehydrogenase (Complex I) which catalyzes electron transfer from NADH through the respiratory chain, using ubiquinone as an electron acceptor. Essential for the catalytic activity of complex I. The sequence is that of NADH-ubiquinone oxidoreductase chain 3 from Microtus pennsylvanicus (Meadow vole).